We begin with the raw amino-acid sequence, 187 residues long: Elongation factor P (187 aa).

It belongs to the elongation factor P family.

The protein resides in the cytoplasm. It participates in protein biosynthesis; polypeptide chain elongation. Involved in peptide bond synthesis. Stimulates efficient translation and peptide-bond synthesis on native or reconstituted 70S ribosomes in vitro. Probably functions indirectly by altering the affinity of the ribosome for aminoacyl-tRNA, thus increasing their reactivity as acceptors for peptidyl transferase. The sequence is that of Elongation factor P from Corynebacterium diphtheriae (strain ATCC 700971 / NCTC 13129 / Biotype gravis).